The following is a 754-amino-acid chain: 5-methyltetrahydropteroyltriglutamate--homocysteine methyltransferase (754 aa).

5-methyltetrahydropteroyltri-L-glutamate is bound by residues 17–20 and Lys117; that span reads RELK. L-homocysteine is bound by residues 431 to 433 and Glu484; that span reads IGS. L-methionine is bound by residues 431 to 433 and Glu484; that span reads IGS. Residues 515–516 and Trp561 each bind 5-methyltetrahydropteroyltri-L-glutamate; that span reads RC. Asp599 contributes to the L-homocysteine binding site. Asp599 provides a ligand contact to L-methionine. Glu605 contributes to the 5-methyltetrahydropteroyltri-L-glutamate binding site. Residues His641, Cys643, and Glu665 each contribute to the Zn(2+) site. The Proton donor role is filled by His694. Cys726 is a binding site for Zn(2+).

The protein belongs to the vitamin-B12 independent methionine synthase family. It depends on Zn(2+) as a cofactor.

It carries out the reaction 5-methyltetrahydropteroyltri-L-glutamate + L-homocysteine = tetrahydropteroyltri-L-glutamate + L-methionine. The protein operates within amino-acid biosynthesis; L-methionine biosynthesis via de novo pathway; L-methionine from L-homocysteine (MetE route): step 1/1. Its function is as follows. Catalyzes the transfer of a methyl group from 5-methyltetrahydrofolate to homocysteine resulting in methionine formation. This Salmonella typhi protein is 5-methyltetrahydropteroyltriglutamate--homocysteine methyltransferase.